The following is a 3801-amino-acid chain: Lysosomal-trafficking regulator (3801 aa).

A disordered region spans residues 148–173 (KITHRYSVRDARKTQLSTSDSEANSD). At serine 164 the chain carries Phosphoserine. Phosphothreonine is present on threonine 165. Residue serine 166 is modified to Phosphoserine. A WD 1 repeat occupies 662–700 (ELSSSLSSPSYRFQGILPSSGSEDLLWKWDALKAYQNFV). The span at 1181-1190 (AMTEKSHQSA) shows a compositional bias: basic and acidic residues. Disordered stretches follow at residues 1181–1203 (AMTEKSHQSAEELSSQPGDFSEE) and 1221–1256 (YEADSESNPEDGETQDDGVDLKSETEGFSASSSPND). Residues 1221–1238 (YEADSESNPEDGETQDDG) are compositionally biased toward acidic residues. Positions 1246-1256 (EGFSASSSPND) are enriched in polar residues. A phosphoserine mark is found at serine 1509 and serine 1510. The WD 2 repeat unit spans residues 1582-1626 (SQENIFLPSKWQHLVLTYLQQPQGKRRIHGKISIWVSGQRKPDVT). Phosphoserine occurs at positions 2105, 2124, 2213, 2217, and 2264. Positions 2205–2215 (KQLGAEPRSED) are enriched in basic and acidic residues. The tract at residues 2205-2224 (KQLGAEPRSEDDSPGDESCP) is disordered. Residues 3009–3115 (AASESIRVNR…VRDDVYHNIL (107 aa)) enclose the BEACH-type PH domain. Residues 3120-3422 (PNLLEYGNIT…QLFHMAHVSR (303 aa)) form the BEACH domain. WD repeat units lie at residues 3563-3602 (SQQYQVTSCAWVPDSCQLFTGSKCGVITAYTNRFTSSTPS), 3614-3653 (GHTEEITSLFVCKPYSILISVSRDGTCIIWDLNRLCYVQS), 3656-3699 (GHKS…VGHV), 3700-3744 (HCRE…PVRE), and 3749-3788 (KSNKPIISLTFSCDGHHLYTANSDGTVIAWCRKDQQRLKQ).

Interacts with CPAP, LIP8 and ZNF521. As to expression, abundantly expressed in adult and fetal thymus, peripheral blood leukocytes, bone marrow and several regions of the adult brain.

The protein resides in the cytoplasm. In terms of biological role, adapter protein that regulates and/or fission of intracellular vesicles such as lysosomes. Might regulate trafficking of effectors involved in exocytosis. In cytotoxic T-cells and natural killer (NK) cells, has role in the regulation of size, number and exocytosis of lytic granules. In macrophages and dendritic cells, regulates phagosome maturation by controlling the conversion of early phagosomal compartments into late phagosomes. In macrophages and dendritic cells, specifically involved in TLR3- and TLR4-induced production of pro-inflammatory cytokines by regulating the endosomal TLR3- TICAM1/TRIF and TLR4- TICAM1/TRIF signaling pathways. This is Lysosomal-trafficking regulator (LYST) from Homo sapiens (Human).